Here is a 154-residue protein sequence, read N- to C-terminus: NADPH-dependent 7-cyano-7-deazaguanine reductase (154 aa).

Over residues 1-13 (MSKTDVSGLSQLG) the composition is skewed to polar residues. Positions 1–24 (MSKTDVSGLSQLGRQVDAPTSPET) are disordered. The active-site Thioimide intermediate is the cysteine 52. Aspartate 59 functions as the Proton donor in the catalytic mechanism. Residues 74–76 (VES) and 93–94 (HE) contribute to the substrate site.

The protein belongs to the GTP cyclohydrolase I family. QueF type 1 subfamily.

The protein resides in the cytoplasm. It carries out the reaction 7-aminomethyl-7-carbaguanine + 2 NADP(+) = 7-cyano-7-deazaguanine + 2 NADPH + 3 H(+). Its pathway is tRNA modification; tRNA-queuosine biosynthesis. Its function is as follows. Catalyzes the NADPH-dependent reduction of 7-cyano-7-deazaguanine (preQ0) to 7-aminomethyl-7-deazaguanine (preQ1). The protein is NADPH-dependent 7-cyano-7-deazaguanine reductase of Allorhizobium ampelinum (strain ATCC BAA-846 / DSM 112012 / S4) (Agrobacterium vitis (strain S4)).